We begin with the raw amino-acid sequence, 491 residues long: Probable CtpA-like serine protease (491 aa).

Residues M1 to K22 form a disordered region. Positions H8–K22 are enriched in polar residues. A helical membrane pass occupies residues L31 to V51. The region spanning T119–G201 is the PDZ domain. Residues S324, D335, and K349 each act as charge relay system in the active site.

The protein belongs to the peptidase S41A family.

It localises to the cell membrane. The protein is Probable CtpA-like serine protease of Staphylococcus epidermidis (strain ATCC 35984 / DSM 28319 / BCRC 17069 / CCUG 31568 / BM 3577 / RP62A).